The chain runs to 214 residues: Adenylate kinase (214 aa).

An ATP-binding site is contributed by 10 to 15 (GAGKGT). Positions 30-59 (STGDMFREEISAKSELGRKVEDILKRGELV) are NMP. AMP-binding positions include T31, R36, 57–59 (ELV), 85–88 (GYPR), and Q92. The segment at 126 to 163 (NRRICKNCGKIYNLITLPPKINGKCDVCGGELYQREDD) is LID. R127 is a binding site for ATP. The Zn(2+) site is built by C130 and C133. Position 136–137 (136–137 (IY)) interacts with ATP. Zn(2+) is bound by residues C150 and C153. AMP contacts are provided by R160 and R171. M199 serves as a coordination point for ATP.

It belongs to the adenylate kinase family. As to quaternary structure, monomer.

It localises to the cytoplasm. It catalyses the reaction AMP + ATP = 2 ADP. It functions in the pathway purine metabolism; AMP biosynthesis via salvage pathway; AMP from ADP: step 1/1. Its function is as follows. Catalyzes the reversible transfer of the terminal phosphate group between ATP and AMP. Plays an important role in cellular energy homeostasis and in adenine nucleotide metabolism. The polypeptide is Adenylate kinase (Thermosipho melanesiensis (strain DSM 12029 / CIP 104789 / BI429)).